The primary structure comprises 647 residues: MMGVGKNTSKSVEVGGSTEGKYEEEAKRPDFFTLPVVINGGATSSGEQDNEDTELMAIYTTENGIAEKSSLAETLDSTGSLDPQRSDMIYTIEDVPPWYLCIFLGLQHYLTCFSGTIAVPFLLADAMCVGDDQWATSQLIGTIFFCVGITTLLQTTFGCRLPLFQASAFAFLAPARAILSLDKWKCNTTEITVANGTAELLEHIWHPRIQEIQGAIIMSSLIEVVIGLLGLPGALLRYIGPLTITPTVALIGLSGFQAAGERAGKHWGIAMLTIFLVLLFSQYARNVKFPLPIYKSKKGWTAYKLQLFKMFPIILAILVSWLLCFIFTVTDVFPSNSTDYGYYARTDARKGVLLVAPWFKVPYPFQWGMPTVSAAGVIGMLSAVVASIIESIGDYYACARLSCAPPPPIHAINRGIFVEGLSCVLDGVFGTGNGSTSSSPNIGVLGITKVGSRRVIQYGAALMLGLGMIGKFSALFASLPDPVLGALFCTLFGMITAVGLSNLQFIDLNSSRNLFVLGFSIFFGLVLPSYLRQNPLVTGITGIDQVLNVLLTTAMFVGGCVAFILDNTIPGTPEERGIKKWKKGVSKGNKSLDGMESYNLPFGMNIIKKYRCFSYLPISPTFAGYTWKGFGKSENRRSSDKDSQATV.

Over residues 1–11 (MMGVGKNTSKS) the composition is skewed to polar residues. The disordered stretch occupies residues 1 to 26 (MMGVGKNTSKSVEVGGSTEGKYEEEA). The Cytoplasmic segment spans residues 8–109 (TSKSVEVGGS…LCIFLGLQHY (102 aa)). At S69 the chain carries Phosphoserine. The residue at position 74 (T74) is a Phosphothreonine. Phosphoserine is present on S77. T78 is modified (phosphothreonine). Residue S80 is modified to Phosphoserine. A helical transmembrane segment spans residues 110–130 (LTCFSGTIAVPFLLADAMCVG). At 131–138 (DDQWATSQ) the chain is on the extracellular side. A helical membrane pass occupies residues 139 to 159 (LIGTIFFCVGITTLLQTTFGC). Position 160 (R160) is a topological domain, cytoplasmic. Residues 161–181 (LPLFQASAFAFLAPARAILSL) form a helical membrane-spanning segment. Topologically, residues 182–215 (DKWKCNTTEITVANGTAELLEHIWHPRIQEIQGA) are extracellular. N-linked (GlcNAc...) asparagine glycans are attached at residues N187 and N195. Residues 216 to 236 (IIMSSLIEVVIGLLGLPGALL) form a helical membrane-spanning segment. Over 237 to 263 (RYIGPLTITPTVALIGLSGFQAAGERA) the chain is Cytoplasmic. A helical membrane pass occupies residues 264–281 (GKHWGIAMLTIFLVLLFS). The Extracellular segment spans residues 282 to 285 (QYAR). The helical intramembrane region spans 286–299 (NVKFPLPIYKSKKG). The Extracellular portion of the chain corresponds to 300–306 (WTAYKLQ). The helical transmembrane segment at 307-327 (LFKMFPIILAILVSWLLCFIF) threads the bilayer. Over 328-368 (TVTDVFPSNSTDYGYYARTDARKGVLLVAPWFKVPYPFQWG) the chain is Cytoplasmic. A helical transmembrane segment spans residues 369–389 (MPTVSAAGVIGMLSAVVASII). Topologically, residues 390-414 (ESIGDYYACARLSCAPPPPIHAINR) are extracellular. A helical membrane pass occupies residues 415 to 435 (GIFVEGLSCVLDGVFGTGNGS). Residues 436-458 (TSSSPNIGVLGITKVGSRRVIQY) lie on the Cytoplasmic side of the membrane. A helical transmembrane segment spans residues 459-479 (GAALMLGLGMIGKFSALFASL). Residues 480 to 482 (PDP) lie on the Extracellular side of the membrane. The helical transmembrane segment at 483 to 503 (VLGALFCTLFGMITAVGLSNL) threads the bilayer. Residues 504-513 (QFIDLNSSRN) lie on the Cytoplasmic side of the membrane. The helical transmembrane segment at 514–534 (LFVLGFSIFFGLVLPSYLRQN) threads the bilayer. The Extracellular portion of the chain corresponds to 535 to 544 (PLVTGITGID). Residues 545-565 (QVLNVLLTTAMFVGGCVAFIL) traverse the membrane as a helical segment. Topologically, residues 566–647 (DNTIPGTPEE…SSDKDSQATV (82 aa)) are cytoplasmic. T646 bears the Phosphothreonine mark.

It belongs to the nucleobase:cation symporter-2 (NCS2) (TC 2.A.40) family. In terms of assembly, interacts with CLSTN3. In terms of processing, phosphorylated. Highly expressed in neural, neuroendocrine, exocrine and endothelial tissues and in osteoblasts. Detected in neurons throughout the central nervous system, in meninges and choroid plexus, in the anterior pituitary, the intermediate lobe, in pancreas, adrenal cortex, gastric glands, and in the inner nuclear layer of the retina.

The protein resides in the cell membrane. The catalysed reaction is L-ascorbate(out) + 2 Na(+)(out) = L-ascorbate(in) + 2 Na(+)(in). Its function is as follows. Sodium/ascorbate cotransporter. Mediates electrogenic uptake of vitamin C, with a stoichiometry of 2 Na(+) for each ascorbate. This chain is Solute carrier family 23 member 2 (Slc23a2), found in Rattus norvegicus (Rat).